The following is a 255-amino-acid chain: Developmental and secondary metabolism regulator MVE1 (255 aa).

A Velvet domain is found at 31-226; it reads GRKLTYRMSV…AEQGCRVRIR (196 aa). The short motif at 45-50 is the Nuclear localization signal element; it reads VRARAC. 2 disordered regions span residues 163–184 and 229–255; these read CKSP…DAHV and VRMR…QARA. A compositionally biased stretch (acidic residues) spans 245–255; that stretch reads NYEDETAQARA.

It belongs to the velvet family. VeA subfamily. As to quaternary structure, component of the heterotrimeric velvet complex composed of LAE1, MVE1 and VEL2; MVE1 acting as a bridging protein between LAE1 and VEL2.

The protein resides in the nucleus. It is found in the cytoplasm. Functionally, component of the velvet transcription factor complex that controls sexual/asexual developmental ratio in response to light, promoting sexual development in the darkness while stimulating asexual sporulation under illumination. The velvet complex hat acts as a global regulator for secondary metabolite gene expression. Controls the expression of the melanin gene cluster. Mediates the light-stimulated formation of aerial mycelia. The sequence is that of Developmental and secondary metabolism regulator MVE1 from Zymoseptoria tritici (strain CBS 115943 / IPO323) (Speckled leaf blotch fungus).